The sequence spans 86 residues: Neurotoxin LmNaTx34.2 (86 aa).

The signal sequence occupies residues 1 to 18 (MKTLILVVIALMVIEVKS). The region spanning 19–85 (DGYLMVRAGR…IWTYEKNTCS (67 aa)) is the LCN-type CS-alpha/beta domain. 4 cysteine pairs are disulfide-bonded: C32–C84, C36–C57, C43–C64, and C47–C66.

The protein belongs to the long (4 C-C) scorpion toxin superfamily. Sodium channel inhibitor family. Beta subfamily. Expressed by the venom gland.

It is found in the secreted. Functionally, binds voltage-independently at site-4 of sodium channels (Nav) and shift the voltage of activation toward more negative potentials thereby affecting sodium channel activation and promoting spontaneous and repetitive firing. This Lychas mucronatus (Chinese swimming scorpion) protein is Neurotoxin LmNaTx34.2.